Reading from the N-terminus, the 339-residue chain is GTPase Obg (339 aa).

One can recognise an Obg domain in the interval M1–L159. The segment at N127–G147 is disordered. One can recognise an OBG-type G domain in the interval A160–E333. Residues G166–S173, F191–Y195, D213–G216, N283–D286, and S314–I316 contribute to the GTP site. Mg(2+)-binding residues include S173 and T193.

Belongs to the TRAFAC class OBG-HflX-like GTPase superfamily. OBG GTPase family. As to quaternary structure, monomer. Requires Mg(2+) as cofactor.

It localises to the cytoplasm. Functionally, an essential GTPase which binds GTP, GDP and possibly (p)ppGpp with moderate affinity, with high nucleotide exchange rates and a fairly low GTP hydrolysis rate. Plays a role in control of the cell cycle, stress response, ribosome biogenesis and in those bacteria that undergo differentiation, in morphogenesis control. This chain is GTPase Obg, found in Coxiella burnetii (strain CbuK_Q154) (Coxiella burnetii (strain Q154)).